The following is a 321-amino-acid chain: Citrate synthase (321 aa).

Catalysis depends on residues His-248 and Asp-306.

It belongs to the citrate synthase family.

It carries out the reaction oxaloacetate + acetyl-CoA + H2O = citrate + CoA + H(+). It functions in the pathway carbohydrate metabolism; tricarboxylic acid cycle; isocitrate from oxaloacetate: step 1/2. In Bartonella bacilliformis, this protein is Citrate synthase (gltA).